Consider the following 261-residue polypeptide: Cytochrome c oxidase subunit 3 (261 aa).

Topologically, residues methionine 1 to proline 15 are mitochondrial matrix. Residues tryptophan 16 to tryptophan 34 form a helical membrane-spanning segment. The Mitochondrial intermembrane portion of the chain corresponds to phenylalanine 35–threonine 40. A helical transmembrane segment spans residues threonine 41 to threonine 66. Topologically, residues phenylalanine 67–threonine 72 are mitochondrial matrix. Residues proline 73–serine 105 traverse the membrane as a helical segment. Residues leucine 106–glutamate 128 lie on the Mitochondrial intermembrane side of the membrane. Residues valine 129–methionine 152 form a helical membrane-spanning segment. Topologically, residues glutamate 153–asparagine 155 are mitochondrial matrix. Residues arginine 156–glutamate 183 form a helical membrane-spanning segment. Topologically, residues alanine 184–aspartate 190 are mitochondrial intermembrane. A helical transmembrane segment spans residues glycine 191–leucine 223. Topologically, residues lysine 224–histidine 232 are mitochondrial matrix. A helical membrane pass occupies residues phenylalanine 233–isoleucine 256. At tyrosine 257 to serine 261 the chain is on the mitochondrial intermembrane side.

It belongs to the cytochrome c oxidase subunit 3 family. In terms of assembly, component of the cytochrome c oxidase (complex IV, CIV), a multisubunit enzyme composed of 14 subunits. The complex is composed of a catalytic core of 3 subunits MT-CO1, MT-CO2 and MT-CO3, encoded in the mitochondrial DNA, and 11 supernumerary subunits COX4I, COX5A, COX5B, COX6A, COX6B, COX6C, COX7A, COX7B, COX7C, COX8 and NDUFA4, which are encoded in the nuclear genome. The complex exists as a monomer or a dimer and forms supercomplexes (SCs) in the inner mitochondrial membrane with NADH-ubiquinone oxidoreductase (complex I, CI) and ubiquinol-cytochrome c oxidoreductase (cytochrome b-c1 complex, complex III, CIII), resulting in different assemblies (supercomplex SCI(1)III(2)IV(1) and megacomplex MCI(2)III(2)IV(2)).

It is found in the mitochondrion inner membrane. It catalyses the reaction 4 Fe(II)-[cytochrome c] + O2 + 8 H(+)(in) = 4 Fe(III)-[cytochrome c] + 2 H2O + 4 H(+)(out). Its function is as follows. Component of the cytochrome c oxidase, the last enzyme in the mitochondrial electron transport chain which drives oxidative phosphorylation. The respiratory chain contains 3 multisubunit complexes succinate dehydrogenase (complex II, CII), ubiquinol-cytochrome c oxidoreductase (cytochrome b-c1 complex, complex III, CIII) and cytochrome c oxidase (complex IV, CIV), that cooperate to transfer electrons derived from NADH and succinate to molecular oxygen, creating an electrochemical gradient over the inner membrane that drives transmembrane transport and the ATP synthase. Cytochrome c oxidase is the component of the respiratory chain that catalyzes the reduction of oxygen to water. Electrons originating from reduced cytochrome c in the intermembrane space (IMS) are transferred via the dinuclear copper A center (CU(A)) of subunit 2 and heme A of subunit 1 to the active site in subunit 1, a binuclear center (BNC) formed by heme A3 and copper B (CU(B)). The BNC reduces molecular oxygen to 2 water molecules using 4 electrons from cytochrome c in the IMS and 4 protons from the mitochondrial matrix. The chain is Cytochrome c oxidase subunit 3 (MT-CO3) from Antilope cervicapra (Blackbuck).